A 184-amino-acid polypeptide reads, in one-letter code: Thymidine kinase (184 aa).

Residues 15–22 and 89–92 contribute to the ATP site; these read GPMFSGKS and DEIQ. Glu90 (proton acceptor) is an active-site residue. Residues Cys146, Cys149, Cys178, and Cys181 each coordinate Zn(2+).

The protein belongs to the thymidine kinase family. In terms of assembly, homotetramer.

The protein resides in the cytoplasm. It carries out the reaction thymidine + ATP = dTMP + ADP + H(+). This chain is Thymidine kinase, found in Mesomycoplasma hyopneumoniae (strain 232) (Mycoplasma hyopneumoniae).